Reading from the N-terminus, the 194-residue chain is UPF0301 protein CBU_2093 (194 aa).

Belongs to the UPF0301 (AlgH) family.

This is UPF0301 protein CBU_2093 from Coxiella burnetii (strain RSA 493 / Nine Mile phase I).